A 388-amino-acid polypeptide reads, in one-letter code: Chorismate synthase (388 aa).

NADP(+) is bound by residues arginine 39 and arginine 45. FMN-binding positions include arginine 130–serine 132, asparagine 251–alanine 252, glycine 296, lysine 311–threonine 315, and arginine 337.

This sequence belongs to the chorismate synthase family. As to quaternary structure, homotetramer. The cofactor is FMNH2.

It carries out the reaction 5-O-(1-carboxyvinyl)-3-phosphoshikimate = chorismate + phosphate. Its pathway is metabolic intermediate biosynthesis; chorismate biosynthesis; chorismate from D-erythrose 4-phosphate and phosphoenolpyruvate: step 7/7. Its function is as follows. Catalyzes the anti-1,4-elimination of the C-3 phosphate and the C-6 proR hydrogen from 5-enolpyruvylshikimate-3-phosphate (EPSP) to yield chorismate, which is the branch point compound that serves as the starting substrate for the three terminal pathways of aromatic amino acid biosynthesis. This reaction introduces a second double bond into the aromatic ring system. This chain is Chorismate synthase, found in Streptococcus pneumoniae (strain 70585).